An 85-amino-acid polypeptide reads, in one-letter code: Large ribosomal subunit protein bL27 (85 aa).

Residues M1–K24 form a disordered region.

The protein belongs to the bacterial ribosomal protein bL27 family.

The protein is Large ribosomal subunit protein bL27 of Geotalea daltonii (strain DSM 22248 / JCM 15807 / FRC-32) (Geobacter daltonii).